The following is a 225-amino-acid chain: MRIVFDIGGSVLVPENPDIDFIKEIAYQLTKVSEDHEVAVVVGGGKLARKYIEVAEKFNSSETFKDFIGIQITRANAMLLIAALREKAYPVVVEDFWEAWKAVQLKKIPVMGGTHPGHTTDAVAALLAEFLKADLLVVITNVDGVYTADPKKDPTAKKIKKMKPEELLEIVGKGIEKAGSSSVIDPLAAKIIARSGIKTIVIGKEDAKDLFRVIKGDHNGTTIEP.

Position 6 (Asp6) interacts with Mg(2+). 9–10 is an ATP binding site; sequence GS. Gly44 is a UMP binding site. Gly45 and Arg49 together coordinate ATP. UMP is bound by residues Asp66 and 114 to 120; that span reads THPGHTT. The Mg(2+) site is built by Thr120 and Asp121. ATP contacts are provided by Thr140, Asn141, Tyr146, and Asp149. A UMP-binding site is contributed by Gly179. Ser182 is a binding site for Mg(2+). An ATP-binding site is contributed by Ser182.

Belongs to the UMP kinase family. Homohexamer; trimer of dimers.

The protein resides in the cytoplasm. The catalysed reaction is UMP + ATP = UDP + ADP. Its pathway is pyrimidine metabolism; CTP biosynthesis via de novo pathway; UDP from UMP (UMPK route): step 1/1. Its activity is regulated as follows. Inhibited by UTP. Functionally, catalyzes the reversible phosphorylation of UMP to UDP, with ATP as the most efficient phosphate donor. The protein is Uridylate kinase (pyrH) of Pyrococcus furiosus (strain ATCC 43587 / DSM 3638 / JCM 8422 / Vc1).